The following is a 413-amino-acid chain: Alpha-1-antitrypsin-like protein GS55-MS (413 aa).

An N-terminal signal peptide occupies residues 1 to 24 (MPSSISWGLLLLAGLSCLVAGSLA). Residues Asn65, Asn102, and Asn266 are each glycosylated (N-linked (GlcNAc...) asparagine). Positions 368-387 (GATFLEMMPMSLPPEVKFDK) are RCL.

This sequence belongs to the serpin family.

The protein resides in the secreted. Its function is as follows. Inhibitor of serine proteases. Its primary target is elastase, but it also has a moderate affinity for plasmin and thrombin. The polypeptide is Alpha-1-antitrypsin-like protein GS55-MS (Ictidomys tridecemlineatus (Thirteen-lined ground squirrel)).